The primary structure comprises 550 residues: MSVADVALSPIHRGSAFAVGGFGQSTTTHYSVKSVLVFLSVSGSTMPMLILESDSIAEVKLRIQTCNGFRVRRQKLVFSGRELARNASRVKDYGVTGGSVLHLVLKLYDPLLVTVITTCGKVFQFHVDRRRNVGYLKKRISKEGKGFPEVDDQEILFKGEKLDDNRIIDGICKDGNSVIHLLVKKSVEDTVKREEDTATGKDSLLEPVVLNPDVKLPEVLEDMIDRTVDGLNKGSPPVRSAEGTGGTYLMQDSSGLNYVSVFKPMDEEPMAVNNPQQLPVSSDGQGLKRGTRVGEGATREVAAYLLDHPKSGLRSVSKEVMGFAGVPPTAMVRSSHKVYNYPNGFSSCATKDAKVGSLQMFMKNNGSCEDIGPGAFPVEEVHKICVFDIRMANADRHAGNILTGKSEEGKTLLIPIDHGYCLPENFEDCTFEWLYWPQAKLPFSADTIDYINSLDSEQDIALLQLHGWNVPEAVSRTLRISTMLLKKGVERNLTPYQIGSVMCRETVNKDSAIEEIVREAHNSVLPASSEATFLEAVSVAMDRRLDELTK.

Ubiquitin-like domains follow at residues 34–111 (SVLV…YDPL) and 112–190 (LVTV…VEDT). The tract at residues 228 to 247 (VDGLNKGSPPVRSAEGTGGT) is disordered. In terms of domain architecture, PI3K/PI4K catalytic spans 234–532 (GSPPVRSAEG…SVLPASSEAT (299 aa)). Residues 240–246 (SAEGTGG) form a G-loop region. ATP-binding positions include 241–247 (AEGTGGT), Lys-263, and 359–362 (QMFM). The interval 392 to 400 (ANADRHAGN) is catalytic loop. The segment at 415–441 (PIDHGYCLPENFEDCTFEWLYWPQAKL) is activation loop. Residue Asp-417 participates in ATP binding.

It belongs to the PI3/PI4-kinase family. Type II PI4K subfamily.

The protein resides in the membrane. The catalysed reaction is a 1,2-diacyl-sn-glycero-3-phospho-(1D-myo-inositol) + ATP = a 1,2-diacyl-sn-glycero-3-phospho-(1D-myo-inositol 4-phosphate) + ADP + H(+). Its function is as follows. The phosphorylation of phosphatidylinositol (PI) to PI4P is the first committed step in the generation of phosphatidylinositol 4,5-bisphosphate (PIP2), a precursor of the second messenger inositol 1,4,5-trisphosphate (InsP3). The sequence is that of Phosphatidylinositol 4-kinase gamma 2 (PI4KG2) from Arabidopsis thaliana (Mouse-ear cress).